The chain runs to 345 residues: Succinylglutamate desuccinylase (345 aa).

His-64, Glu-67, and His-161 together coordinate Zn(2+). Glu-225 is an active-site residue.

Belongs to the AspA/AstE family. Succinylglutamate desuccinylase subfamily. Zn(2+) is required as a cofactor.

It carries out the reaction N-succinyl-L-glutamate + H2O = L-glutamate + succinate. The protein operates within amino-acid degradation; L-arginine degradation via AST pathway; L-glutamate and succinate from L-arginine: step 5/5. Transforms N(2)-succinylglutamate into succinate and glutamate. This Shewanella pealeana (strain ATCC 700345 / ANG-SQ1) protein is Succinylglutamate desuccinylase.